The following is a 389-amino-acid chain: MESRCYGCAVKFTLFKKEYGCKNCGRAFCNGCLSFSALVPRAGNTQQKVCKQCHTILTRGSSDNASKWSPPQNYKKRVAALEAKKKSSTSHSQSLTHKDQAIAERLARLRQENKPKSVPSQAEIEARLAALKDEVQGPIPSTQEMEDRLAALQGRVPPSHTVRPAHQAPDTRTQAQQTQDLLTQLTAEVAIDENCQPRASASLQNDLNKGAARSQRTNSQGQASQSLEEEKYKLLAEAAVELQEENTRQERILALAKRLAVLKGQDPSRVTLQDYHLPDSDEDEETAIQRVMQQLTEEAALDEASGFNIPEKPAPGSRAQPCKAEMEGPQAEEEELPWCCICNEDATLRCAGCDGDLYCARCFREGHDNFDLKEHQTSPYHPRRPCQEH.

The FYVE-type zinc-finger motif lies at 1 to 58; sequence MESRCYGCAVKFTLFKKEYGCKNCGRAFCNGCLSFSALVPRAGNTQQKVCKQCHTILT. Residues C5, C8, C21, C24, C29, C32, C50, and C53 each contribute to the Zn(2+) site. S69 carries the phosphoserine modification. Positions 99 to 112 match the MIM1-A motif; that stretch reads DQAIAERLARLRQE. K132 is covalently cross-linked (Glycyl lysine isopeptide (Lys-Gly) (interchain with G-Cter in SUMO2)). 2 disordered regions span residues 158–177 and 204–227; these read PSHT…QAQQ and QNDL…SQSL. Over residues 167–177 the composition is skewed to low complexity; sequence QAPDTRTQAQQ. A compositionally biased stretch (polar residues) spans 214–226; sequence SQRTNSQGQASQS. S219 is subject to Phosphoserine. The stretch at 226-261 forms a coiled coil; it reads SLEEEKYKLLAEAAVELQEENTRQERILALAKRLAV. The short motif at 252–265 is the MIM1-B element; the sequence is ILALAKRLAVLKGQ. S280 carries the phosphoserine modification.

As to quaternary structure, interacts (via MIM1-B) with VPS4A; interaction takes place at the midbody ring following cytokinesis checkpoint activation.

It is found in the cytoplasm. It localises to the cytoskeleton. The protein localises to the microtubule organizing center. Its subcellular location is the centrosome. The protein resides in the cleavage furrow. It is found in the midbody. It localises to the midbody ring. Its function is as follows. Key regulator of abscission step in cytokinesis: part of the cytokinesis checkpoint, a process required to delay abscission to prevent both premature resolution of intercellular chromosome bridges and accumulation of DNA damage. Together with CHMP4C, required to retain abscission-competent VPS4 (VPS4A and/or VPS4B) at the midbody ring until abscission checkpoint signaling is terminated at late cytokinesis. Deactivation of AURKB results in dephosphorylation of CHMP4C followed by its dissociation from ZFYVE19/ANCHR and VPS4 and subsequent abscission. The chain is Abscission/NoCut checkpoint regulator (Zfyve19) from Mus musculus (Mouse).